A 53-amino-acid chain; its full sequence is Tsetse thrombin inhibitor (53 aa).

Residues 1–21 (MKFFTVLFFLLSIIYLIVAAP) form the signal peptide.

Expressed at high levels in salivary glands and midguts of adult tsetse flies.

It localises to the secreted. Potent and specific inhibitor of human thrombin. It is also a potent inhibitor of thrombin-induced platelet aggregation. It is capable of antagonizing host hemostasis and facilitating blood feeding. In Glossina morsitans morsitans (Savannah tsetse fly), this protein is Tsetse thrombin inhibitor (TTI).